Consider the following 155-residue polypeptide: Protein FAM163B (155 aa).

A helical transmembrane segment spans residues Val-6 to Cys-26.

This sequence belongs to the FAM163 family.

Its subcellular location is the membrane. The polypeptide is Protein FAM163B (fam163b) (Xenopus tropicalis (Western clawed frog)).